We begin with the raw amino-acid sequence, 278 residues long: 4-diphosphocytidyl-2-C-methyl-D-erythritol kinase (278 aa).

Lys9 is a catalytic residue. 93–103 (PLGGGLGGGSS) serves as a coordination point for ATP. Asp135 is an active-site residue.

This sequence belongs to the GHMP kinase family. IspE subfamily.

The catalysed reaction is 4-CDP-2-C-methyl-D-erythritol + ATP = 4-CDP-2-C-methyl-D-erythritol 2-phosphate + ADP + H(+). Its pathway is isoprenoid biosynthesis; isopentenyl diphosphate biosynthesis via DXP pathway; isopentenyl diphosphate from 1-deoxy-D-xylulose 5-phosphate: step 3/6. Its function is as follows. Catalyzes the phosphorylation of the position 2 hydroxy group of 4-diphosphocytidyl-2C-methyl-D-erythritol. The polypeptide is 4-diphosphocytidyl-2-C-methyl-D-erythritol kinase (Nitrosomonas eutropha (strain DSM 101675 / C91 / Nm57)).